The sequence spans 240 residues: Pyridoxine 5'-phosphate synthase (240 aa).

Position 7 (Asn-7) interacts with 3-amino-2-oxopropyl phosphate. 9–10 (DH) contributes to the 1-deoxy-D-xylulose 5-phosphate binding site. Residue Arg-18 participates in 3-amino-2-oxopropyl phosphate binding. Catalysis depends on His-43, which acts as the Proton acceptor. 1-deoxy-D-xylulose 5-phosphate-binding residues include Arg-45 and His-50. Catalysis depends on Glu-70, which acts as the Proton acceptor. Residue Thr-100 participates in 1-deoxy-D-xylulose 5-phosphate binding. His-191 serves as the catalytic Proton donor. 3-amino-2-oxopropyl phosphate is bound by residues Gly-192 and 213-214 (GH).

Belongs to the PNP synthase family. Homooctamer; tetramer of dimers.

The protein resides in the cytoplasm. The catalysed reaction is 3-amino-2-oxopropyl phosphate + 1-deoxy-D-xylulose 5-phosphate = pyridoxine 5'-phosphate + phosphate + 2 H2O + H(+). Its pathway is cofactor biosynthesis; pyridoxine 5'-phosphate biosynthesis; pyridoxine 5'-phosphate from D-erythrose 4-phosphate: step 5/5. Catalyzes the complicated ring closure reaction between the two acyclic compounds 1-deoxy-D-xylulose-5-phosphate (DXP) and 3-amino-2-oxopropyl phosphate (1-amino-acetone-3-phosphate or AAP) to form pyridoxine 5'-phosphate (PNP) and inorganic phosphate. The polypeptide is Pyridoxine 5'-phosphate synthase (Coxiella burnetii (strain Dugway 5J108-111)).